The chain runs to 149 residues: Small heat shock protein IbpB (149 aa).

Residues 26 to 137 enclose the sHSP domain; that stretch reads SQEPIDFPPY…QPQRIAIGGG (112 aa).

This sequence belongs to the small heat shock protein (HSP20) family. As to quaternary structure, homodimer. Forms homomultimers of about 100-150 subunits at optimal growth temperatures. Conformation changes to oligomers at high temperatures or high ionic concentrations. The decrease in size of the multimers is accompanied by an increase in chaperone activity.

It is found in the cytoplasm. In terms of biological role, associates with aggregated proteins, together with IbpA, to stabilize and protect them from irreversible denaturation and extensive proteolysis during heat shock and oxidative stress. Aggregated proteins bound to the IbpAB complex are more efficiently refolded and reactivated by the ATP-dependent chaperone systems ClpB and DnaK/DnaJ/GrpE. Its activity is ATP-independent. The chain is Small heat shock protein IbpB from Pectobacterium carotovorum subsp. carotovorum (strain PC1).